The sequence spans 103 residues: MSGRGKGGKGLGKGGAKRHRKVLRDNIQGITKPAIRRLARRGGVKRISNTIYEETRGVLKTFLENVIRDAVTYTEHARRKTVTAMDVVYALKRQGRTLYGFGG.

Over residues 1–14 (MSGRGKGGKGLGKG) the composition is skewed to gly residues. A disordered region spans residues 1–20 (MSGRGKGGKGLGKGGAKRHR). Residues 17–21 (KRHRK) mediate DNA binding.

It belongs to the histone H4 family. As to quaternary structure, the nucleosome is a histone octamer containing two molecules each of H2A, H2B, H3 and H4 assembled in one H3-H4 heterotetramer and two H2A-H2B heterodimers. The octamer wraps approximately 147 bp of DNA.

The protein resides in the nucleus. The protein localises to the chromosome. Functionally, core component of nucleosome. Nucleosomes wrap and compact DNA into chromatin, limiting DNA accessibility to the cellular machineries which require DNA as a template. Histones thereby play a central role in transcription regulation, DNA repair, DNA replication and chromosomal stability. DNA accessibility is regulated via a complex set of post-translational modifications of histones, also called histone code, and nucleosome remodeling. The sequence is that of Histone H4 (H41) from Physarum polycephalum (Slime mold).